Here is a 610-residue protein sequence, read N- to C-terminus: Sulfite reductase [NADPH] flavoprotein alpha-component (610 aa).

Residues 68-206 (IIVISASQTG…EVDKWKEKVV (139 aa)) form the Flavodoxin-like domain. FMN contacts are provided by residues 74-79 (SQTGNA), 121-124 (STHG), and 157-166 (LGDRSYEYFA). Residues 243–459 (EFPLIAYLLN…VESNDNFRLP (217 aa)) form the FAD-binding FR-type domain. Residues Thr331, Ser365, 397–400 (RFYS), 415–417 (TVS), Tyr421, and 430–433 (GGAS) each bind FAD. Residues 530–531 (SR), 536–540 (KVYVQ), and Asp572 each bind NADP(+). Tyr610 is an FAD binding site.

The protein belongs to the NADPH-dependent sulphite reductase flavoprotein subunit CysJ family. This sequence in the N-terminal section; belongs to the flavodoxin family. In the C-terminal section; belongs to the flavoprotein pyridine nucleotide cytochrome reductase family. Alpha(8)-beta(8). The alpha component is a flavoprotein, the beta component is a hemoprotein. FAD is required as a cofactor. FMN serves as cofactor.

The catalysed reaction is hydrogen sulfide + 3 NADP(+) + 3 H2O = sulfite + 3 NADPH + 4 H(+). Its pathway is sulfur metabolism; hydrogen sulfide biosynthesis; hydrogen sulfide from sulfite (NADPH route): step 1/1. Functionally, component of the sulfite reductase complex that catalyzes the 6-electron reduction of sulfite to sulfide. This is one of several activities required for the biosynthesis of L-cysteine from sulfate. The flavoprotein component catalyzes the electron flow from NADPH -&gt; FAD -&gt; FMN to the hemoprotein component. The sequence is that of Sulfite reductase [NADPH] flavoprotein alpha-component from Blochmanniella floridana.